Consider the following 496-residue polypeptide: Alpha-amylase (496 aa).

Cys29 and Cys85 form a disulfide bridge. Ca(2+)-binding residues include Asn99, Arg155, and Asp164. Arg192 serves as a coordination point for chloride. Asp194 (nucleophile) is an active-site residue. His198 serves as a coordination point for Ca(2+). Catalysis depends on Glu230, which acts as the Proton donor. Residue Arg332 participates in chloride binding. 2 disulfide bridges follow: Cys374–Cys380 and Cys448–Cys460.

Belongs to the glycosyl hydrolase 13 family. In terms of assembly, monomer. It depends on Ca(2+) as a cofactor. Chloride is required as a cofactor. Post-translationally, disulfide bonds are present.

It localises to the secreted. It catalyses the reaction Endohydrolysis of (1-&gt;4)-alpha-D-glucosidic linkages in polysaccharides containing three or more (1-&gt;4)-alpha-linked D-glucose units.. Its activity is regulated as follows. Inhibited by alpha-amylase inhibitors from wheat and rye. The most effective inhibitors are the wheat tetrameric alpha-amylase inhibitor (WTAI) and the rye dimeric alpha-amylase inhibitor (RDAI-1). Not inhibited by alpha-amylase inhibitor from barley. Its function is as follows. Aids in the digestion of starch and glycogen derived from food, such as skin scales, fungi and bacteria. This chain is Alpha-amylase, found in Dermatophagoides pteronyssinus (European house dust mite).